We begin with the raw amino-acid sequence, 568 residues long: Probable inactive poly [ADP-ribose] polymerase SRO1 (568 aa).

Positions 1–18 (MEAKIVKVSDSSYKDGLG) are enriched in basic and acidic residues. Positions 1–32 (MEAKIVKVSDSSYKDGLGKKRKHPGNYTPYDS) are disordered. The WWE domain maps to 77–152 (RYFSYYKKTG…ETGVKTQLAW (76 aa)). Disordered regions lie at residues 220 to 241 (DFQA…DSCS) and 453 to 500 (ILPT…RRPR). Positions 245–463 (DDAVEKWDKT…LPTTQSRHES (219 aa)) constitute a PARP catalytic domain. One can recognise an RST domain in the interval 497–568 (RRPRSPIMPF…TITGLQRSLG (72 aa)).

Interacts with DREB2A, DREB2B, DREB2C and NAC082. As to expression, expressed in young developing tissues, such as young leaves and flowers and root tips. In mature plants, expressed in vasculature of leaves and roots.

It localises to the nucleus matrix. In terms of biological role, probable inactive ADP-ribosyltransferase that functions with RCD1 to regulate oxidative stress, hormonal and developmental responses. May regulate some stress-responsive genes. Seems to play a smaller developmental role than R. This Arabidopsis thaliana (Mouse-ear cress) protein is Probable inactive poly [ADP-ribose] polymerase SRO1 (SRO1).